The following is a 79-amino-acid chain: Small ribosomal subunit protein uS17 (79 aa).

The protein belongs to the universal ribosomal protein uS17 family. In terms of assembly, part of the 30S ribosomal subunit.

Its function is as follows. One of the primary rRNA binding proteins, it binds specifically to the 5'-end of 16S ribosomal RNA. The chain is Small ribosomal subunit protein uS17 from Bartonella tribocorum (strain CIP 105476 / IBS 506).